The following is a 487-amino-acid chain: Lysophospholipid acyltransferase 5 (487 aa).

Ala-2 is subject to N-acetylalanine. The next 6 helical transmembrane spans lie at 44-64 (LIISIFLGYPFALFYRHYLFY), 84-104 (FNFGNQLYHSLLCIVLQFLIL), 111-131 (ITAVLTTFCFQMAYLLAGYYY), 180-200 (GVPSLLEVAGFSYFYGAFLVG), 227-247 (IIPALKRLSLGLFYLVGYTLL), and 285-305 (VTCWLVTEGVCILTGLGFNGF). Active-site residues include Asn-338 and His-374. Helical transmembrane passes span 364 to 384 (GLSLLFLALWHGLHSGYLVCF), 422 to 442 (LVQQTIHWLFMGYSMTAFCLF), and 453 to 473 (SIYFLGHIFFLSLLFILPYIH). A Di-lysine motif motif is present at residues 484–487 (KKME).

This sequence belongs to the membrane-bound acyltransferase family. As to expression, highly expressed in liver, pancreas and adipose tissue. Very low expression in skeletal muscle and heart. Detected in neutrophils.

Its subcellular location is the endoplasmic reticulum membrane. The catalysed reaction is a 1-acyl-sn-glycero-3-phosphocholine + an acyl-CoA = a 1,2-diacyl-sn-glycero-3-phosphocholine + CoA. It carries out the reaction a 1-acyl-sn-glycero-3-phosphoethanolamine + an acyl-CoA = a 1,2-diacyl-sn-glycero-3-phosphoethanolamine + CoA. It catalyses the reaction a 1-acyl-sn-glycero-3-phospho-L-serine + an acyl-CoA = a 1,2-diacyl-sn-glycero-3-phospho-L-serine + CoA. The enzyme catalyses (9Z,12Z)-octadecadienoyl-CoA + a 1-acyl-sn-glycero-3-phosphocholine = 1-acyl-2-(9Z,12Z)-octadecadienoyl-sn-glycero-3-phosphocholine + CoA. The catalysed reaction is (5Z,8Z,11Z,14Z)-eicosatetraenoyl-CoA + a 1-acyl-sn-glycero-3-phosphocholine = 1-acyl-2-(5Z,8Z,11Z,14Z-eicosatetraenoyl)-sn-glycero-3-phosphocholine + CoA. It carries out the reaction dodecanoyl-CoA + 1-hexadecanoyl-sn-glycero-3-phosphocholine = 1-hexadecanoyl-2-dodecanoyl-sn-glycero-3-phosphocholine + CoA. It catalyses the reaction octadecanoyl-CoA + 1-hexadecanoyl-sn-glycero-3-phosphocholine = 1-hexadecanoyl-2-octadecanoyl-sn-glycero-3-phosphocholine + CoA. The enzyme catalyses 1-dodecanoyl-sn-glycero-3-phosphocholine + hexadecanoyl-CoA = 1-dodecanoyl-2-hexadecanoyl-sn-glycero-3-phosphocholine + CoA. The catalysed reaction is 1-tetradecanoyl-sn-glycero-3-phosphocholine + hexadecanoyl-CoA = 1-tetradecanoyl-2-hexadecanoyl-sn-glycero-3-phosphocholine + CoA. It carries out the reaction 1-hexadecanoyl-sn-glycero-3-phosphocholine + hexadecanoyl-CoA = 1,2-dihexadecanoyl-sn-glycero-3-phosphocholine + CoA. It catalyses the reaction 1-octadecanoyl-sn-glycero-3-phosphocholine + hexadecanoyl-CoA = 1-octadecanoyl-2-hexadecanoyl-sn-glycero-3-phosphocholine + CoA. The enzyme catalyses 1-(9Z-octadecenoyl)-sn-glycero-3-phosphocholine + hexadecanoyl-CoA = 1-(9Z-octadecenoyl)-2-hexadecanoyl-sn-glycero-3-phosphocholine + CoA. The catalysed reaction is (9Z)-hexadecenoyl-CoA + 1-hexadecanoyl-sn-glycero-3-phosphocholine = 1-hexadecanoyl-2-(9Z-hexadecenoyl)-sn-glycero-3-phosphocholine + CoA. It carries out the reaction 1-hexadecanoyl-sn-glycero-3-phosphocholine + (9Z)-octadecenoyl-CoA = 1-hexadecanoyl-2-(9Z-octadecenoyl)-sn-glycero-3-phosphocholine + CoA. It catalyses the reaction (9Z,12Z)-octadecadienoyl-CoA + 1-hexadecanoyl-sn-glycero-3-phosphocholine = 1-hexadecanoyl-2-(9Z,12Z-octadecadienoyl)-sn-glycero-3-phosphocholine + CoA. The enzyme catalyses 1-dodecanoyl-sn-glycero-3-phosphocholine + (5Z,8Z,11Z,14Z)-eicosatetraenoyl-CoA = 1-dodecanoyl-2-(5Z,8Z,11Z,14Z)-eicosatetraenoyl-sn-glycero-3-phosphocholine + CoA. The catalysed reaction is (5Z,8Z,11Z,14Z)-eicosatetraenoyl-CoA + 1-hexadecanoyl-sn-glycero-3-phosphocholine = 1-hexadecanoyl-2-(5Z,8Z,11Z,14Z-eicosatetraenoyl)-sn-glycero-3-phosphocholine + CoA. It carries out the reaction 1-octadecanoyl-sn-glycero-3-phosphocholine + (5Z,8Z,11Z,14Z)-eicosatetraenoyl-CoA = 1-octadecanoyl-2-(5Z,8Z,11Z,14Z-eicosatetraenoyl)-sn-glycero-3-phosphocholine + CoA. It catalyses the reaction 1-eicosanoyl-sn-glycero-3-phosphocholine + (5Z,8Z,11Z,14Z)-eicosatetraenoyl-CoA = 1-eicosanoyl-2-(5Z,8Z,11Z,14Z)-eicosatetraenoyl-sn-glycero-3-phosphocholine + CoA. The enzyme catalyses 1-(9Z-octadecenoyl)-sn-glycero-3-phosphocholine + (9Z)-octadecenoyl-CoA = 1,2-di-(9Z-octadecenoyl)-sn-glycero-3-phosphocholine + CoA. The catalysed reaction is 1-(9Z-octadecenoyl)-sn-glycero-3-phosphocholine + (9Z,12Z)-octadecadienoyl-CoA = 1-(9Z)-octadecenoyl-2-(9Z,12Z)-octadecadienoyl-sn-glycero-3-phosphocholine + CoA. It carries out the reaction 1-(9Z-octadecenoyl)-sn-glycero-3-phosphocholine + (5Z,8Z,11Z,14Z)-eicosatetraenoyl-CoA = 1-(9Z)-octadecenoyl-2-(5Z,8Z,11Z,14Z)-icosatetraenoyl-sn-glycero-3-phosphocholine + CoA. It catalyses the reaction a 1-acyl-sn-glycero-3-phosphoethanolamine + (9Z,12Z)-octadecadienoyl-CoA = 1-acyl-2-(9Z,12Z)-octadecadienoyl-sn-glycero-3-phosphoethanolamine + CoA. The enzyme catalyses 1-(9Z-octadecenoyl)-sn-glycero-3-phosphoethanolamine + (9Z,12Z)-octadecadienoyl-CoA = 1-(9Z)-octadecenoyl-2-(9Z,12Z)-octadecadienoyl-sn-glycero-3-phosphoethanolamine + CoA. The catalysed reaction is 1-(10Z-heptadecenoyl)-sn-glycero-3-phosphoethanolamine + (9Z,12Z)-octadecadienoyl-CoA = 1-(10Z-heptadecenoyl)-2-(9Z,12Z-octadecadienoyl)-sn-glycero-3-phosphoethanolamine + CoA. It carries out the reaction a 1-acyl-sn-glycero-3-phosphoethanolamine + (5Z,8Z,11Z,14Z)-eicosatetraenoyl-CoA = 1-acyl-2-(5Z,8Z,11Z,14Z)-eicosatetraenoyl-sn-glycero-3-phosphoethanolamine + CoA. It catalyses the reaction 1-hexadecanoyl-sn-glycero-3-phosphoethanolamine + (5Z,8Z,11Z,14Z)-eicosatetraenoyl-CoA = 1-hexadecanoyl-2-(5Z,8Z,11Z,14Z-eicosatetraenoyl)-sn-glycero-3-phosphoethanolamine + CoA. The enzyme catalyses 1-(9Z-octadecenoyl)-sn-glycero-3-phosphoethanolamine + (5Z,8Z,11Z,14Z)-eicosatetraenoyl-CoA = 1-(9Z)-octadecenoyl-2-(5Z,8Z,11Z,14Z)-eicosatetraenoyl-sn-glycero-3-phosphoethanolamine + CoA. The catalysed reaction is 1-(10Z-heptadecenoyl)-sn-glycero-3-phosphoethanolamine + (5Z,8Z,11Z,14Z)-eicosatetraenoyl-CoA = 1-(10Z-heptadecenoyl)-2-(5Z,8Z,11Z,14Z-eicosatetraenoyl)-sn-glycero-3-phosphoethanolamine + CoA. It carries out the reaction a 1-O-(1Z-alkenyl)-sn-glycero-3-phosphoethanolamine + (5Z,8Z,11Z,14Z)-eicosatetraenoyl-CoA = 1-O-(1Z)-alkenyl-2-(5Z,8Z,11Z,14Z)-eicosatetraenoyl-sn-glycero-3-phosphoethanolamine + CoA. It catalyses the reaction a 1-acyl-sn-glycero-3-phospho-L-serine + (9Z,12Z)-octadecadienoyl-CoA = 1-acyl-2-(9Z,12Z-octadecadienoyl)-sn-glycero-3-phospho-L-serine + CoA. The enzyme catalyses a 1-acyl-sn-glycero-3-phospho-L-serine + (5Z,8Z,11Z,14Z)-eicosatetraenoyl-CoA = 1-acyl-2-(5Z,8Z,11Z,14Z-eicosatetraenoyl)-sn-glycero-3-phospho-L-serine + CoA. The catalysed reaction is 1-hexadecanoyl-sn-glycero-3-phospho-L-serine + (9Z)-octadecenoyl-CoA = 1-hexadecanoyl-2-(9Z-octadecenoyl)-sn-glycero-3-phospho-L-serine + CoA. It carries out the reaction 1-(9Z-octadecenoyl)-sn-glycero-3-phospho-L-serine + (9Z)-octadecenoyl-CoA = 1,2-di-(9Z)-octadecenoyl-sn-glycero-3-phospho-L-serine + CoA. It catalyses the reaction 1-hexadecanoyl-sn-glycero-3-phospho-L-serine + (9Z,12Z)-octadecadienoyl-CoA = 1-hexadecanoyl-2-(9Z,12Z-octadecadienoyl)-sn-glycero-3-phospho-L-serine + CoA. The enzyme catalyses 1-(9Z-octadecenoyl)-sn-glycero-3-phospho-L-serine + (9Z,12Z)-octadecadienoyl-CoA = 1-(9Z-octadecenoyl)-2-(9Z,12Z-octadienoyl)-sn-glycero-3-phospho-L-serine + CoA. The catalysed reaction is 1-hexadecanoyl-sn-glycero-3-phospho-L-serine + (5Z,8Z,11Z,14Z)-eicosatetraenoyl-CoA = 1-hexadecanoyl-2-(5Z,8Z,11Z,14Z-eicosatetraenoyl)-sn-glycero-3-phospho-L-serine + CoA. It carries out the reaction 1-(9Z-octadecenoyl)-sn-glycero-3-phospho-L-serine + (5Z,8Z,11Z,14Z)-eicosatetraenoyl-CoA = 1-(9Z-octadecenoyl)-2-(5Z,8Z,11Z,14Z-eicosatetraenoyl)-sn-glycero-3-phospho-L-serine + CoA. It participates in lipid metabolism; phospholipid metabolism. Its activity is regulated as follows. Activity is inhibited by thimerosal. Functionally, lysophospholipid O-acyltransferase (LPLAT) that catalyzes the reacylation step of the phospholipid remodeling process also known as the Lands cycle. Catalyzes transfer of the fatty acyl chain from fatty acyl-CoA to 1-acyl lysophospholipid to form various classes of phospholipids. Converts 1-acyl lysophosphatidylcholine (LPC) into phosphatidylcholine (PC) (LPCAT activity), 1-acyl lysophosphatidylserine (LPS) into phosphatidylserine (PS) (LPSAT activity) and 1-acyl lysophosphatidylethanolamine (LPE) into phosphatidylethanolamine (PE) (LPEAT activity). Favors polyunsaturated fatty acyl-CoAs as acyl donors compared to saturated fatty acyl-CoAs. Has higher activity for LPC acyl acceptors compared to LPEs and LPSs. Can also transfer the fatty acyl chain from fatty acyl-CoA to 1-O-alkyl lysophospholipid or 1-O-alkenyl lysophospholipid with lower efficiency. Acts as a major LPC O-acyltransferase in liver and intestine. As a component of the liver X receptor/NR1H3 or NR1H2 signaling pathway, mainly catalyzes the incorporation of arachidonate into PCs of endoplasmic reticulum (ER) membranes, increasing membrane dynamics and enabling triacylglycerols transfer to nascent very low-density lipoprotein (VLDL) particles. Promotes processing of sterol regulatory protein SREBF1 in hepatocytes, likely by facilitating the translocation of SREBF1-SCAP complex from ER to the Golgi apparatus. Participates in mechanisms by which the liver X receptor/NR1H3 or NR1H2 signaling pathway counteracts lipid-induced ER stress response and inflammation. Down-regulates hepatic inflammation by limiting arachidonic acid availability for synthesis of inflammatory eicosanoids, such as prostaglandins. In enterocytes, acts as a component of a gut-brain feedback loop that coordinates dietary lipid absorption and food intake. Regulates the abundance of PCs containing linoleate and arachidonate in enterocyte membranes, enabling passive diffusion of fatty acids and cholesterol across the membrane for efficient chylomicron assembly. In the intestinal crypt, acts as a component of dietary-responsive phospholipid-cholesterol axis, regulating the biosynthesis of cholesterol and its mitogenic effects on intestinal stem cells. This is Lysophospholipid acyltransferase 5 (LPCAT3) from Homo sapiens (Human).